Reading from the N-terminus, the 264-residue chain is Thymidylate synthase (264 aa).

Arg-21 provides a ligand contact to dUMP. Residue His-51 participates in (6R)-5,10-methylene-5,6,7,8-tetrahydrofolate binding. 126–127 (RR) serves as a coordination point for dUMP. The active-site Nucleophile is Cys-146. DUMP-binding positions include 166 to 169 (RSAD), Asn-177, and 207 to 209 (HLY). Residue Asp-169 participates in (6R)-5,10-methylene-5,6,7,8-tetrahydrofolate binding. Ala-263 lines the (6R)-5,10-methylene-5,6,7,8-tetrahydrofolate pocket.

Belongs to the thymidylate synthase family. Bacterial-type ThyA subfamily. Homodimer.

The protein localises to the cytoplasm. It carries out the reaction dUMP + (6R)-5,10-methylene-5,6,7,8-tetrahydrofolate = 7,8-dihydrofolate + dTMP. The protein operates within pyrimidine metabolism; dTTP biosynthesis. In terms of biological role, catalyzes the reductive methylation of 2'-deoxyuridine-5'-monophosphate (dUMP) to 2'-deoxythymidine-5'-monophosphate (dTMP) while utilizing 5,10-methylenetetrahydrofolate (mTHF) as the methyl donor and reductant in the reaction, yielding dihydrofolate (DHF) as a by-product. This enzymatic reaction provides an intracellular de novo source of dTMP, an essential precursor for DNA biosynthesis. This chain is Thymidylate synthase, found in Rhizobium etli (strain ATCC 51251 / DSM 11541 / JCM 21823 / NBRC 15573 / CFN 42).